A 332-amino-acid chain; its full sequence is Glucokinase (332 aa).

15 to 20 (ADIGGT) contributes to the ATP binding site.

This sequence belongs to the bacterial glucokinase family.

The protein resides in the cytoplasm. It catalyses the reaction D-glucose + ATP = D-glucose 6-phosphate + ADP + H(+). This chain is Glucokinase, found in Campylobacter jejuni subsp. doylei (strain ATCC BAA-1458 / RM4099 / 269.97).